We begin with the raw amino-acid sequence, 80 residues long: DinI-like protein Z2083/ECs2153 (80 aa).

The sequence is that of DinI-like protein Z2083/ECs2153 from Escherichia coli O157:H7.